A 1384-amino-acid chain; its full sequence is RRP12-like protein (1384 aa).

Residues 1–13 (MGKFRSKLKRNGK) show a composition bias toward basic residues. The interval 1–32 (MGKFRSKLKRNGKGKTWSRGESATSNPTQMKH) is disordered. Residues 19 to 29 (RGESATSNPTQ) are compositionally biased toward polar residues. A phosphoserine mark is found at Ser-82, Ser-85, Ser-96, Ser-1094, Ser-1095, Ser-1117, and Ser-1119. Disordered stretches follow at residues 1082-1102 (LRKK…LVSG), 1114-1155 (LADS…IRED), and 1176-1384 (SAQT…KKYK). Composition is skewed to acidic residues over residues 1090-1099 (AQEDSSDDEL) and 1114-1127 (LADS…DMDA). Residues 1176-1191 (SAQTATPAQSQKTKAQ) are compositionally biased toward polar residues. A phosphoserine mark is found at Ser-1221, Ser-1225, Ser-1227, Ser-1230, Ser-1250, and Ser-1251. Polar residues-rich tracts occupy residues 1276-1285 (SGKTTASSRY) and 1297-1315 (TAGN…TSRP). Positions 1321 to 1334 (GSKKAKGDMKKSGK) are enriched in basic and acidic residues. Residues 1348–1362 (LNKRKRSMNSRKFKS) show a composition bias toward basic residues. Positions 1369 to 1378 (AENGGAGGGR) are enriched in gly residues.

Belongs to the RRP12 family.

It is found in the nucleus. The protein is RRP12-like protein of Drosophila melanogaster (Fruit fly).